The chain runs to 366 residues: Chorismate synthase (366 aa).

Residue Arg48 coordinates NADP(+). FMN-binding positions include 125–127, 238–239, Gly278, 293–297, and Arg319; these read RSS, NA, and KPTSS.

This sequence belongs to the chorismate synthase family. In terms of assembly, homotetramer. The cofactor is FMNH2.

It carries out the reaction 5-O-(1-carboxyvinyl)-3-phosphoshikimate = chorismate + phosphate. It functions in the pathway metabolic intermediate biosynthesis; chorismate biosynthesis; chorismate from D-erythrose 4-phosphate and phosphoenolpyruvate: step 7/7. Its function is as follows. Catalyzes the anti-1,4-elimination of the C-3 phosphate and the C-6 proR hydrogen from 5-enolpyruvylshikimate-3-phosphate (EPSP) to yield chorismate, which is the branch point compound that serves as the starting substrate for the three terminal pathways of aromatic amino acid biosynthesis. This reaction introduces a second double bond into the aromatic ring system. The polypeptide is Chorismate synthase (Alkalilimnicola ehrlichii (strain ATCC BAA-1101 / DSM 17681 / MLHE-1)).